We begin with the raw amino-acid sequence, 74 residues long: Conotoxin Im6.10 (74 aa).

Residues 1–19 form the signal peptide; that stretch reads MKTGMIICLLLIAFMDADG. A propeptide spanning residues 20 to 47 is cleaved from the precursor; it reads SPGDTLYSQKTADTDSGMKRFQKTFQKR. 3 cysteine pairs are disulfide-bonded: cysteine 49–cysteine 58, cysteine 52–cysteine 63, and cysteine 57–cysteine 73.

As to expression, expressed by the venom duct.

The protein resides in the secreted. Probable neurotoxin. The protein is Conotoxin Im6.10 of Conus imperialis (Imperial cone).